Here is a 196-residue protein sequence, read N- to C-terminus: V-type proton ATPase subunit E (196 aa).

It belongs to the V-ATPase E subunit family.

Functionally, produces ATP from ADP in the presence of a proton gradient across the membrane. In Clostridium botulinum (strain Alaska E43 / Type E3), this protein is V-type proton ATPase subunit E.